The primary structure comprises 351 residues: Signal recognition particle receptor FtsY (351 aa).

GTP is bound by residues 156-163, 238-242, and 302-305; these read GINGTGKT, DTAGR, and TKLD.

The protein belongs to the GTP-binding SRP family. FtsY subfamily. As to quaternary structure, part of the signal recognition particle protein translocation system, which is composed of SRP and FtsY. SRP is a ribonucleoprotein composed of Ffh and a 4.5S RNA molecule.

Its subcellular location is the cell membrane. The protein resides in the cytoplasm. It catalyses the reaction GTP + H2O = GDP + phosphate + H(+). Functionally, involved in targeting and insertion of nascent membrane proteins into the cytoplasmic membrane. Acts as a receptor for the complex formed by the signal recognition particle (SRP) and the ribosome-nascent chain (RNC). Interaction with SRP-RNC leads to the transfer of the RNC complex to the Sec translocase for insertion into the membrane, the hydrolysis of GTP by both Ffh and FtsY, and the dissociation of the SRP-FtsY complex into the individual components. This chain is Signal recognition particle receptor FtsY, found in Buchnera aphidicola subsp. Schizaphis graminum (strain Sg).